The following is a 557-amino-acid chain: Urocanate hydratase (557 aa).

NAD(+)-binding positions include 53–54 (GG), Q131, 177–179 (GMG), E197, R202, 243–244 (NA), 264–268 (QTSAH), 274–275 (YL), and Y323. C411 is an active-site residue. G493 is an NAD(+) binding site.

Belongs to the urocanase family. It depends on NAD(+) as a cofactor.

Its subcellular location is the cytoplasm. It catalyses the reaction 4-imidazolone-5-propanoate = trans-urocanate + H2O. The protein operates within amino-acid degradation; L-histidine degradation into L-glutamate; N-formimidoyl-L-glutamate from L-histidine: step 2/3. Catalyzes the conversion of urocanate to 4-imidazolone-5-propionate. The chain is Urocanate hydratase from Pseudomonas putida (strain ATCC 700007 / DSM 6899 / JCM 31910 / BCRC 17059 / LMG 24140 / F1).